A 431-amino-acid polypeptide reads, in one-letter code: Glucose-1-phosphate adenylyltransferase (431 aa).

A beta-D-fructose 1,6-bisphosphate-binding site is contributed by Lys-39. The AMP site is built by Arg-40, His-46, and Arg-52. Tyr-114 is a binding site for alpha-D-glucose 1-phosphate. Arg-130 serves as a coordination point for AMP. Residues Gly-179, Glu-194–Lys-195, and Ser-212 contribute to the alpha-D-glucose 1-phosphate site. AMP contacts are provided by Glu-370 and Arg-386. Beta-D-fructose 1,6-bisphosphate contacts are provided by residues Arg-419–Arg-423 and Gln-429–Arg-431.

It belongs to the bacterial/plant glucose-1-phosphate adenylyltransferase family. As to quaternary structure, homotetramer.

It carries out the reaction alpha-D-glucose 1-phosphate + ATP + H(+) = ADP-alpha-D-glucose + diphosphate. It participates in glycan biosynthesis; glycogen biosynthesis. With respect to regulation, allosterically activated by fructose-1,6-bisphosphate (F16BP) and inhibited by AMP. Its function is as follows. Involved in the biosynthesis of ADP-glucose, a building block required for the elongation reactions to produce glycogen. Catalyzes the reaction between ATP and alpha-D-glucose 1-phosphate (G1P) to produce pyrophosphate and ADP-Glc. The sequence is that of Glucose-1-phosphate adenylyltransferase from Escherichia coli O45:K1 (strain S88 / ExPEC).